The following is a 317-amino-acid chain: Cytochrome f (317 aa).

The first 34 residues, 1–34, serve as a signal peptide directing secretion; the sequence is MINFKKQIMKKTTFFLCAMLLVSSILIAPRSSLA. Residues Tyr35, Cys55, Cys58, and His59 each coordinate heme. A helical membrane pass occupies residues 284–304; that stretch reads IIGLIAFFIGVGLTQILLVLK.

Belongs to the cytochrome f family. The 4 large subunits of the cytochrome b6-f complex are cytochrome b6, subunit IV (17 kDa polypeptide, PetD), cytochrome f and the Rieske protein, while the 4 small subunits are PetG, PetL, PetM and PetN. The complex functions as a dimer. Heme serves as cofactor.

The protein localises to the cellular thylakoid membrane. Component of the cytochrome b6-f complex, which mediates electron transfer between photosystem II (PSII) and photosystem I (PSI), cyclic electron flow around PSI, and state transitions. This Prochlorococcus marinus (strain MIT 9515) protein is Cytochrome f.